The following is a 492-amino-acid chain: Probable Xaa-Pro aminopeptidase AO090005001240 (492 aa).

Residues Asp-272, Asp-283, Glu-420, and Glu-459 each contribute to the Mn(2+) site.

It belongs to the peptidase M24B family. Requires Mn(2+) as cofactor.

The enzyme catalyses Release of any N-terminal amino acid, including proline, that is linked to proline, even from a dipeptide or tripeptide.. Catalyzes the removal of a penultimate prolyl residue from the N-termini of peptides. The polypeptide is Probable Xaa-Pro aminopeptidase AO090005001240 (Aspergillus oryzae (strain ATCC 42149 / RIB 40) (Yellow koji mold)).